The primary structure comprises 195 residues: Cysteine/O-acetylserine efflux protein (195 aa).

Topologically, residues 1 to 7 (MTPTLLS) are periplasmic. The chain crosses the membrane as a helical span at residues 8–28 (AFWTYTLITAMTPGPNNILAL). At 29–46 (SSATSHGFRQSTRVLAGM) the chain is on the cytoplasmic side. A helical transmembrane segment spans residues 47 to 67 (SLGFLIVMLLCAGISFSLAVI). Over 68-69 (DP) the chain is Periplasmic. Residues 70-90 (AAVHLLSWAGAAYIVWLAWKI) form a helical membrane-spanning segment. Residues 91-104 (ATSPTKEDGLQTKP) lie on the Cytoplasmic side of the membrane. Residues 105-125 (ISFWASFALQFVNVKIILYGV) traverse the membrane as a helical segment. The Periplasmic segment spans residues 126–141 (TALSTFVLPQTQALSW). Residues 142-162 (VVGVSVLLAMIGTFGNVCWAL) traverse the membrane as a helical segment. Residues 163–176 (AGHLFQRLFRQYGR) lie on the Cytoplasmic side of the membrane. A helical transmembrane segment spans residues 177–194 (QLNIVLALLLVYCAVRIF). Position 195 (Y195) is a topological domain, periplasmic.

Belongs to the Rht family.

The protein localises to the cell inner membrane. It catalyses the reaction O-acetyl-L-serine(in) = O-acetyl-L-serine(out). The enzyme catalyses L-cysteine(in) = L-cysteine(out). Functionally, exporter of O-acetylserine (OAS) and cysteine. The sequence is that of Cysteine/O-acetylserine efflux protein (eamB) from Escherichia coli O1:K1 / APEC.